We begin with the raw amino-acid sequence, 249 residues long: 23S rRNA (guanosine-2'-O-)-methyltransferase RlmB (249 aa).

Residues glycine 200, isoleucine 220, and leucine 229 each contribute to the S-adenosyl-L-methionine site.

It belongs to the class IV-like SAM-binding methyltransferase superfamily. RNA methyltransferase TrmH family. RlmB subfamily.

Its subcellular location is the cytoplasm. It carries out the reaction guanosine(2251) in 23S rRNA + S-adenosyl-L-methionine = 2'-O-methylguanosine(2251) in 23S rRNA + S-adenosyl-L-homocysteine + H(+). Specifically methylates the ribose of guanosine 2251 in 23S rRNA. This is 23S rRNA (guanosine-2'-O-)-methyltransferase RlmB from Xanthomonas axonopodis pv. citri (strain 306).